Reading from the N-terminus, the 62-residue chain is Large ribosomal subunit protein bL28 (62 aa).

It belongs to the bacterial ribosomal protein bL28 family.

In Aliarcobacter butzleri (strain RM4018) (Arcobacter butzleri), this protein is Large ribosomal subunit protein bL28.